The sequence spans 616 residues: Hemagglutinin-neuraminidase (616 aa).

Residues 1 to 26 lie on the Intravirion side of the membrane; sequence MDRAVSQVALENDEREAKNTWRLVFR. The helical transmembrane segment at 27-47 threads the bilayer; that stretch reads IAILLLTVVTLAISAAALAYS. Residues 48–616 lie on the Virion surface side of the membrane; sequence MEASTPSDLV…ELESYAASWP (569 aa). An N-linked (GlcNAc...) asparagine; by host glycan is attached at Asn-119. Residues 124-152 form an important for interaction with fusion/F protein region; sequence GAPIHDPDYIGGIGKELIVDDASDVTSFY. Disulfide bonds link Cys-172–Cys-196, Cys-186–Cys-247, and Cys-238–Cys-251. Residues 234–239 are involved in neuraminidase activity; sequence NRKSCS. N-linked (GlcNAc...) asparagine; by host glycans are attached at residues Asn-341 and Asn-433. 2 cysteine pairs are disulfide-bonded: Cys-344–Cys-461 and Cys-455–Cys-465. Residues Asn-481, Asn-538, and Asn-600 are each glycosylated (N-linked (GlcNAc...) asparagine; by host). Cys-531 and Cys-542 are joined by a disulfide.

This sequence belongs to the paramyxoviruses hemagglutinin-neuraminidase family. Homotetramer; composed of disulfide-linked homodimers. Interacts with F protein trimer. Interacts with host CG-1B; this interaction inhibits viral adsorption and replication rather than internalization.

The protein resides in the virion membrane. It localises to the host cell membrane. It catalyses the reaction Hydrolysis of alpha-(2-&gt;3)-, alpha-(2-&gt;6)-, alpha-(2-&gt;8)- glycosidic linkages of terminal sialic acid residues in oligosaccharides, glycoproteins, glycolipids, colominic acid and synthetic substrates.. Its function is as follows. Mediates the viral entry into the host cell together with fusion/F protein. Attaches the virus to sialic acid-containing cell receptors and thereby initiates infection. Binding of HN protein to the receptor induces a conformational change that allows the F protein to trigger virion/cell membranes fusion. In terms of biological role, neuraminidase activity ensures the efficient spread of the virus by dissociating the mature virions from the neuraminic acid containing glycoproteins. This Gallus gallus (Chicken) protein is Hemagglutinin-neuraminidase (HN).